The following is a 304-amino-acid chain: Haloalkane dehalogenase (304 aa).

Residues 42–154 (PIVFLHGNPT…DSVDLSPEFV (113 aa)) enclose the AB hydrolase-1 domain. The Nucleophile role is filled by aspartate 114. The Proton donor role is filled by glutamate 138. Histidine 280 functions as the Proton acceptor in the catalytic mechanism.

The protein belongs to the haloalkane dehalogenase family. Type 2 subfamily. As to quaternary structure, monomer.

The catalysed reaction is 1-haloalkane + H2O = a halide anion + a primary alcohol + H(+). Its function is as follows. Catalyzes hydrolytic cleavage of carbon-halogen bonds in halogenated aliphatic compounds, leading to the formation of the corresponding primary alcohols, halide ions and protons. The polypeptide is Haloalkane dehalogenase (Agrobacterium fabrum (strain C58 / ATCC 33970) (Agrobacterium tumefaciens (strain C58))).